The sequence spans 295 residues: Acetylglutamate kinase (295 aa).

Residues 64–65 (GG), arginine 86, and asparagine 190 contribute to the substrate site.

Belongs to the acetylglutamate kinase family. ArgB subfamily.

It localises to the cytoplasm. The catalysed reaction is N-acetyl-L-glutamate + ATP = N-acetyl-L-glutamyl 5-phosphate + ADP. Its pathway is amino-acid biosynthesis; L-arginine biosynthesis; N(2)-acetyl-L-ornithine from L-glutamate: step 2/4. In terms of biological role, catalyzes the ATP-dependent phosphorylation of N-acetyl-L-glutamate. This is Acetylglutamate kinase from Oleidesulfovibrio alaskensis (strain ATCC BAA-1058 / DSM 17464 / G20) (Desulfovibrio alaskensis).